The chain runs to 454 residues: Dihydrolipoyllysine-residue succinyltransferase component of 2-oxoglutarate dehydrogenase complex, mitochondrial (454 aa).

Residues 1–68 (MLSRSRCVSR…RFFQTTAVCK (68 aa)) constitute a mitochondrion transit peptide. Positions 71-145 (VITVQTPAFA…EGGTPLFTLR (75 aa)) constitute a Lipoyl-binding domain. Position 82 is a phosphoserine (Ser-82). At Lys-111 the chain carries N6-lipoyllysine. The segment at 147–227 (TGAAPAKAKP…KGLRSEHREK (81 aa)) is disordered. The segment covering 149–163 (AAPAKAKPAETPAPA) has biased composition (low complexity). Lys-155 is modified (N6-acetyllysine). Pro residues predominate over residues 186–197 (PPVPSPSQPPSS). A compositionally biased stretch (low complexity) spans 198–217 (KPVSAIKPTAAPPLAEAGAA). 5 positions are modified to N6-acetyllysine: Lys-268, Lys-273, Lys-274, Lys-278, and Lys-308. Catalysis depends on residues His-425 and Asp-429.

The protein belongs to the 2-oxoacid dehydrogenase family. As to quaternary structure, the 2-oxoglutarate dehydrogenase complex is composed of OGDH (2-oxoglutarate dehydrogenase; E1), DLST (dihydrolipoamide succinyltransferase; E2), DLD (dihydrolipoamide dehydrogenase; E3) and the assembly factor KGD4. It contains multiple copies of the three enzymatic components (E1, E2 and E3). In the nucleus, the 2-oxoglutarate dehydrogenase complex associates with KAT2A. Interacts with ABHD11; this interaction maintains the functional lipoylation of the 2-oxoglutarate dehydrogenase complex. (R)-lipoate serves as cofactor.

The protein resides in the mitochondrion matrix. It is found in the nucleus. The catalysed reaction is N(6)-[(R)-dihydrolipoyl]-L-lysyl-[protein] + succinyl-CoA = N(6)-[(R)-S(8)-succinyldihydrolipoyl]-L-lysyl-[protein] + CoA. Its pathway is amino-acid degradation; L-lysine degradation via saccharopine pathway; glutaryl-CoA from L-lysine: step 6/6. It functions in the pathway carbohydrate metabolism; tricarboxylic acid cycle. In terms of biological role, dihydrolipoamide succinyltransferase (E2) component of the 2-oxoglutarate dehydrogenase complex. The 2-oxoglutarate dehydrogenase complex catalyzes the overall conversion of 2-oxoglutarate to succinyl-CoA and CO(2). The 2-oxoglutarate dehydrogenase complex is mainly active in the mitochondrion. A fraction of the 2-oxoglutarate dehydrogenase complex also localizes in the nucleus and is required for lysine succinylation of histones: associates with KAT2A on chromatin and provides succinyl-CoA to histone succinyltransferase KAT2A. In Mus musculus (Mouse), this protein is Dihydrolipoyllysine-residue succinyltransferase component of 2-oxoglutarate dehydrogenase complex, mitochondrial.